The following is a 188-amino-acid chain: Ras-related protein Rap-1 (188 aa).

12–19 (GSGGVGKS) contributes to the GTP binding site. Residues 34–42 (YDPTIEDSY) carry the Effector region motif. GTP is bound by residues 59 to 63 (DTAGT) and 118 to 121 (NKCD). Cysteine 185 bears the Cysteine methyl ester mark. The S-geranylgeranyl cysteine moiety is linked to residue cysteine 185. The propeptide at 186–188 (ILL) is removed in mature form.

Belongs to the small GTPase superfamily. Ras family.

Its subcellular location is the cell membrane. It catalyses the reaction GTP + H2O = GDP + phosphate + H(+). The sequence is that of Ras-related protein Rap-1 (RAP1) from Physarum polycephalum (Slime mold).